Reading from the N-terminus, the 121-residue chain is Holo-[acyl-carrier-protein] synthase (121 aa).

Residues Asp8 and Glu55 each contribute to the Mg(2+) site.

The protein belongs to the P-Pant transferase superfamily. AcpS family. Requires Mg(2+) as cofactor.

It is found in the cytoplasm. The enzyme catalyses apo-[ACP] + CoA = holo-[ACP] + adenosine 3',5'-bisphosphate + H(+). Transfers the 4'-phosphopantetheine moiety from coenzyme A to a Ser of acyl-carrier-protein. In Caldicellulosiruptor bescii (strain ATCC BAA-1888 / DSM 6725 / KCTC 15123 / Z-1320) (Anaerocellum thermophilum), this protein is Holo-[acyl-carrier-protein] synthase.